A 78-amino-acid polypeptide reads, in one-letter code: Sec-independent protein translocase protein TatA (78 aa).

A helical membrane pass occupies residues Met-1–Gly-21. The segment covering Gly-42–Asp-60 has biased composition (basic and acidic residues). The segment at Gly-42–Val-78 is disordered.

This sequence belongs to the TatA/E family. In terms of assembly, the Tat system comprises two distinct complexes: a TatABC complex, containing multiple copies of TatA, TatB and TatC subunits, and a separate TatA complex, containing only TatA subunits. Substrates initially bind to the TatABC complex, which probably triggers association of the separate TatA complex to form the active translocon.

It is found in the cell inner membrane. Functionally, part of the twin-arginine translocation (Tat) system that transports large folded proteins containing a characteristic twin-arginine motif in their signal peptide across membranes. TatA could form the protein-conducting channel of the Tat system. The protein is Sec-independent protein translocase protein TatA of Rhodopseudomonas palustris (strain BisB18).